The following is a 181-amino-acid chain: ATP synthase subunit delta (181 aa).

Belongs to the ATPase delta chain family. F-type ATPases have 2 components, F(1) - the catalytic core - and F(0) - the membrane proton channel. F(1) has five subunits: alpha(3), beta(3), gamma(1), delta(1), epsilon(1). F(0) has three main subunits: a(1), b(2) and c(10-14). The alpha and beta chains form an alternating ring which encloses part of the gamma chain. F(1) is attached to F(0) by a central stalk formed by the gamma and epsilon chains, while a peripheral stalk is formed by the delta and b chains.

The protein resides in the cell membrane. In terms of biological role, f(1)F(0) ATP synthase produces ATP from ADP in the presence of a proton or sodium gradient. F-type ATPases consist of two structural domains, F(1) containing the extramembraneous catalytic core and F(0) containing the membrane proton channel, linked together by a central stalk and a peripheral stalk. During catalysis, ATP synthesis in the catalytic domain of F(1) is coupled via a rotary mechanism of the central stalk subunits to proton translocation. Its function is as follows. This protein is part of the stalk that links CF(0) to CF(1). It either transmits conformational changes from CF(0) to CF(1) or is implicated in proton conduction. This chain is ATP synthase subunit delta, found in Oceanobacillus iheyensis (strain DSM 14371 / CIP 107618 / JCM 11309 / KCTC 3954 / HTE831).